Here is a 793-residue protein sequence, read N- to C-terminus: MARELSQEALLDFLCQAGGRVTNAALLSHFKSFLRDPDASPSQHQHRRELFKGFVNSVAAVRQDPDGTKYVVLKRRYRDLLGEEGLQRPREPPAAAPSAGGAAPCSPRGARRGEPPQQQPRRRRREKEPEEEPAGAAARAADAACNGLPGSDSRRAPGKGGGSKGSPGQRPPVPAAAAAGAQARASCAAAKTQGRCCWECLQNNLAVLPGELGALPHSATAEEKPARALPAQDDRGASREREEGALAEPAPVPAVAHSPPATVEAATSRASPPALLPGPAPRGDRPELLTPSSLHYSTLQQQQQRTREWVARHPQVPEARDQGPIRAWSVLPDNFLQLPLEPGSTEPNSEPPDPCLSSHSLFPVVPDESWESWAGNPSLTVFRSIRCQLSLQDLDDFVDQESDGSEESSSGPKDSPGASEEGLQVVLGTPDRGKLRNPAGGLSVSRKEGSPSRSPQGLRNRGDGHISQQVPAGANGLAGHPLKPLPWPVPKLRRSLRRSSLAGRAKLSSSDEEYLDEGLLKRSRRPPRSRKPSKAGTAPSPRVDAGLSLKLAEVKAVVAERGWRHSLWVPSGEGSAALAPHRTSEHKSSLVPLDAREHEWIVKLASGSWIQVWTLFWEDPQLALHKDFLTGYTALHWIAKHGDLRALQDLVSGAKKAGIVLDVNVRSSCGYTPLHLAAIHGHQGVIKLLVQRLASRVNVRDSSGKKPWQYLTSNTSGEIWQLLGAPRGKPIFPVYPLVGSSSPTRKAKSKEISRSVTRKTSFAALLKSQHNKWKLANQYEKFHSPREREEYSD.

Disordered stretches follow at residues 83 to 185 (EEGL…QARA), 219 to 290 (ATAE…ELLT), 337 to 360 (QLPL…SSHS), and 396 to 543 (DFVD…SPRV). 3 stretches are compositionally biased toward low complexity: residues 96 to 108 (APSA…CSPR), 134 to 144 (AGAAARAADAA), and 175 to 185 (AAAAAGAQARA). At S106 the chain carries Phosphoserine. Positions 220 to 244 (TAEEKPARALPAQDDRGASREREEG) are enriched in basic and acidic residues. Positions 246–273 (LAEPAPVPAVAHSPPATVEAATSRASPP) are enriched in low complexity. At S271 the chain carries Phosphoserine. Residues 396–406 (DFVDQESDGSE) show a composition bias toward acidic residues. Low complexity-rich tracts occupy residues 407-417 (ESSSGPKDSPG) and 498-508 (RSSLAGRAKLS). Residues 521 to 533 (KRSRRPPRSRKPS) show a composition bias toward basic residues. ANK repeat units lie at residues 630–659 (TGYT…KAGI) and 669–699 (CGYT…RVNV). S761 is subject to Phosphoserine.

This sequence belongs to the SOWAH family.

The chain is Ankyrin repeat domain-containing protein SOWAHB (SOWAHB) from Homo sapiens (Human).